The primary structure comprises 1185 residues: Liprin-alpha-4 (1185 aa).

Coiled-coil stretches lie at residues 24–123 (ANFE…CLVS) and 165–499 (DEKV…GRGG). Disordered regions lie at residues 638 to 709 (SASP…RTLR) and 721 to 757 (EEGK…KSSI). S640 bears the Phosphoserine mark. Positions 645–656 (GRSTPKLTSRSA) are enriched in polar residues. S681 carries the post-translational modification Phosphoserine. Positions 684-695 (SREENREDKATI) are enriched in basic and acidic residues. Over residues 729–742 (DQGSNPSSSNSSQD) the composition is skewed to low complexity. 3 consecutive SAM domains span residues 829-895 (WDGP…MVSL), 944-1008 (NHEW…LKRL), and 1032-1101 (WTND…LLAL).

It belongs to the liprin family. Liprin-alpha subfamily. In terms of assembly, forms homodimers and heterodimers with liprins-alpha and liprins-beta. Interacts with the second PTPase domain of PTPRD, PTPRF and PTPRS. Interacts with RIMS1 and RIMS2. Interacts with GIT1 and GIT2. Interacts with GRIP1. Interacts with KIF1A. In terms of tissue distribution, expressed only in the heart, brain, and skeletal muscle.

It localises to the cytoplasm. The protein resides in the cell surface. In terms of biological role, may regulate the disassembly of focal adhesions. May localize receptor-like tyrosine phosphatases type 2A at specific sites on the plasma membrane, possibly regulating their interaction with the extracellular environment and their association with substrates. The polypeptide is Liprin-alpha-4 (PPFIA4) (Homo sapiens (Human)).